The sequence spans 145 residues: Large ribosomal subunit protein bL17 (145 aa).

This sequence belongs to the bacterial ribosomal protein bL17 family. As to quaternary structure, part of the 50S ribosomal subunit. Contacts protein L32.

This Francisella tularensis subsp. holarctica (strain FTNF002-00 / FTA) protein is Large ribosomal subunit protein bL17.